We begin with the raw amino-acid sequence, 172 residues long: Translocator protein 2 (172 aa).

A run of 5 helical transmembrane segments spans residues 3 to 23 (PQGAIFVALPHLGPILVSLLT), 45 to 65 (VLLAGWITIYFVMGYASYLVW), 80 to 100 (LGLYAVQLAVSWAVLIFFFAA), 104 to 124 (GLALLHMLLLYGLVVSTALIW), and 130 to 150 (LAAVLLLPYLAWLTVTASIAY).

The protein belongs to the TspO/BZRP family. In terms of assembly, homotetramer. May also form homodimer. Expressed in erythrocytes (at protein level).

It is found in the endoplasmic reticulum membrane. Its subcellular location is the cell membrane. Its function is as follows. Cholesterol-binding protein involved in the redistribution of cholesterol from lipid droplets to the endoplasmic reticulum. Required to meet cholesterol demands during erythropoietic differentiation. May play a role in transport processes at the plasma membrane of erythrocytes, including regulating VDAC-mediated ATP export, and import of the heme precursors protoporphyrin IX and 5-aminolevulinic acid. In Canis lupus familiaris (Dog), this protein is Translocator protein 2.